The sequence spans 1153 residues: ATP-dependent helicase/deoxyribonuclease subunit B (1153 aa).

ATP is bound at residue 8-15 (GRAGSGKS). Residues Cys786, Cys1104, Cys1107, and Cys1113 each coordinate [4Fe-4S] cluster.

Belongs to the helicase family. AddB/RexB type 1 subfamily. In terms of assembly, heterodimer of AddA and AddB. The cofactor is Mg(2+). [4Fe-4S] cluster serves as cofactor.

The heterodimer acts as both an ATP-dependent DNA helicase and an ATP-dependent, dual-direction single-stranded exonuclease. Recognizes the chi site generating a DNA molecule suitable for the initiation of homologous recombination. The AddB subunit has 5' -&gt; 3' nuclease activity but not helicase activity. The protein is ATP-dependent helicase/deoxyribonuclease subunit B of Clostridium acetobutylicum (strain ATCC 824 / DSM 792 / JCM 1419 / IAM 19013 / LMG 5710 / NBRC 13948 / NRRL B-527 / VKM B-1787 / 2291 / W).